The sequence spans 655 residues: Peroxidase skpo-1 (655 aa).

Residues 1-19 form the signal peptide; the sequence is MKSLLFSILLIYLIQLVRS. In terms of domain architecture, ShKT spans 22 to 56; the sequence is CTDKHIHCFFWSQEGECEVNPRWMKKHCQKACGTC. 4 disulfides stabilise this stretch: cysteine 22/cysteine 56, cysteine 29/cysteine 49, cysteine 38/cysteine 53, and cysteine 133/cysteine 150. Residue histidine 222 is the Proton acceptor of the active site. Histidine 428 provides a ligand contact to heme b. Intrachain disulfides connect cysteine 520-cysteine 576 and cysteine 617-cysteine 642.

This sequence belongs to the peroxidase family. XPO subfamily. The cofactor is heme b. In terms of tissue distribution, exclusively expressed in hypodermis.

The catalysed reaction is 2 a phenolic donor + H2O2 = 2 a phenolic radical donor + 2 H2O. In terms of biological role, involved in hypodermal immune response against some types of bacterial infection. Probably utilizes H(2)O(2) produced by the NADPH oxidase bli-3. May play a role in cuticule biosynthesis. This Caenorhabditis elegans protein is Peroxidase skpo-1.